Reading from the N-terminus, the 198-residue chain is MARTPVRQHLVEKGTQVFLERGYSGSAVQDITAAAEVPKGSFYNHFESKEAFGGQVLQEFFSDLQRTISSTLEDASVPPVRRLQNYFAAIIETLDGQGCLIGNFSVELSPLSDVVRTELLRIFEQWVKPFQKCIIEGQETGSIRRDLAPDLLADFLIASWQGAILRMKIERNREPLDQFLTVVFEALLPSTENISNES.

In terms of domain architecture, HTH tetR-type spans 4-64 (TPVRQHLVEK…QVLQEFFSDL (61 aa)).

In terms of biological role, transcriptional repressor for the dhaA haloalkane dehalogenase gene. In Mycobacterium sp. (strain GP1), this protein is HTH-type transcriptional repressor DhaR (dhaR).